The primary structure comprises 486 residues: Meiosis-specific nuclear structural protein 1 (486 aa).

Coiled-coil stretches lie at residues Q52 to H198 and E230 to A440.

It belongs to the MNS1 family.

Its subcellular location is the nucleus. The protein localises to the cytoplasm. It localises to the cytoskeleton. The protein resides in the cilium axoneme. It is found in the flagellum axoneme. Functionally, microtubule inner protein (MIP) part of the dynein-decorated doublet microtubules (DMTs) in cilia axoneme, which is required for motile cilia beating. May play a role in the control of meiotic division and germ cell differentiation through regulation of pairing and recombination during meiosis. Required for sperm flagella assembly. May play a role in the assembly and function of the outer dynein arm-docking complex (ODA-DC). ODA-DC mediates outer dynein arms (ODA) binding onto the axonemal doublet microtubules. The chain is Meiosis-specific nuclear structural protein 1 (mns1) from Danio rerio (Zebrafish).